The primary structure comprises 598 residues: Aspartate--tRNA(Asp/Asn) ligase (598 aa).

Glu174 contacts L-aspartate. The segment at 198–201 is aspartate; it reads QQLK. Residue Arg220 coordinates L-aspartate. ATP is bound by residues 220-222 and Gln229; that span reads RDE. His458 provides a ligand contact to L-aspartate. Glu492 is a binding site for ATP. Residue Arg499 coordinates L-aspartate. ATP is bound at residue 544-547; the sequence is GIDR.

It belongs to the class-II aminoacyl-tRNA synthetase family. Type 1 subfamily. Homodimer.

The protein resides in the cytoplasm. The enzyme catalyses tRNA(Asx) + L-aspartate + ATP = L-aspartyl-tRNA(Asx) + AMP + diphosphate. In terms of biological role, aspartyl-tRNA synthetase with relaxed tRNA specificity since it is able to aspartylate not only its cognate tRNA(Asp) but also tRNA(Asn). Reaction proceeds in two steps: L-aspartate is first activated by ATP to form Asp-AMP and then transferred to the acceptor end of tRNA(Asp/Asn). The chain is Aspartate--tRNA(Asp/Asn) ligase from Dehalococcoides mccartyi (strain CBDB1).